The primary structure comprises 154 residues: Myoglobin (154 aa).

Residues 2 to 148 (GLSDGEWQLV…FRKDMASNYK (147 aa)) form the Globin domain. S4 is modified (phosphoserine). H65 is a nitrite binding site. H65 lines the O2 pocket. A Phosphothreonine modification is found at T68. Residue H94 participates in heme b binding.

This sequence belongs to the globin family. Monomeric.

The protein localises to the cytoplasm. Its subcellular location is the sarcoplasm. The enzyme catalyses Fe(III)-heme b-[protein] + nitric oxide + H2O = Fe(II)-heme b-[protein] + nitrite + 2 H(+). It carries out the reaction H2O2 + AH2 = A + 2 H2O. Monomeric heme protein which primary function is to store oxygen and facilitate its diffusion within muscle tissues. Reversibly binds oxygen through a pentacoordinated heme iron and enables its timely and efficient release as needed during periods of heightened demand. Depending on the oxidative conditions of tissues and cells, and in addition to its ability to bind oxygen, it also has a nitrite reductase activity whereby it regulates the production of bioactive nitric oxide. Under stress conditions, like hypoxia and anoxia, it also protects cells against reactive oxygen species thanks to its pseudoperoxidase activity. The polypeptide is Myoglobin (MB) (Hylobates agilis (Agile gibbon)).